Reading from the N-terminus, the 353-residue chain is Anthranilate phosphoribosyltransferase (353 aa).

5-phospho-alpha-D-ribose 1-diphosphate contacts are provided by residues G87, G90–D91, T95, N97–T100, K115–S123, and T127. An anthranilate-binding site is contributed by G87. Position 99 (S99) interacts with Mg(2+). Anthranilate is bound at residue N118. Residue R173 coordinates anthranilate. Residues D231 and E232 each contribute to the Mg(2+) site.

It belongs to the anthranilate phosphoribosyltransferase family. Homodimer. It depends on Mg(2+) as a cofactor.

The enzyme catalyses N-(5-phospho-beta-D-ribosyl)anthranilate + diphosphate = 5-phospho-alpha-D-ribose 1-diphosphate + anthranilate. It participates in amino-acid biosynthesis; L-tryptophan biosynthesis; L-tryptophan from chorismate: step 2/5. Catalyzes the transfer of the phosphoribosyl group of 5-phosphorylribose-1-pyrophosphate (PRPP) to anthranilate to yield N-(5'-phosphoribosyl)-anthranilate (PRA). The polypeptide is Anthranilate phosphoribosyltransferase (Salinispora arenicola (strain CNS-205)).